The sequence spans 292 residues: NAC domain-containing protein 105 (292 aa).

Residues 12-162 (IPPGFRFHPT…GWVVCRAFKK (151 aa)) form the NAC domain. Residues 112–168 (IGMRKTLVFYRGRAPNGQKSDWIIHEYYSLESHQNSPPQEEGWVVCRAFKKRTTIPT) mediate DNA binding. Residues 237–259 (LPQLESPSLPSEITPHSTTFSEN) are compositionally biased toward polar residues. Residues 237–269 (LPQLESPSLPSEITPHSTTFSENSSRKDDMSSE) are disordered. Residues 260–269 (SSRKDDMSSE) show a composition bias toward basic and acidic residues.

Belongs to the plant vascular related NAC-domain protein family. Interacts with NAC030/VND7. Detected in root protoxylem and metaxylem poles and in vessels of protoxylems, outermost metaxylems, inner metaxylems, shoots and hypocotyls. Expressed in roots, hypocotyls, cotyledons and leaves. Present in developing xylems. Present in root developing xylems. Specifically expressed in vessels but not in interfascicular fibers in stems.

It localises to the nucleus. Its function is as follows. Transcription activator that binds to the secondary wall NAC binding element (SNBE), 5'-(T/A)NN(C/T)(T/C/G)TNNNNNNNA(A/C)GN(A/C/T)(A/T)-3', in the promoter of target genes. Involved in xylem formation by promoting the expression of secondary wall-associated transcription factors and of genes involved in secondary wall biosynthesis and programmed cell death, genes driven by the secondary wall NAC binding element (SNBE). Triggers thickening of secondary walls. In Arabidopsis thaliana (Mouse-ear cress), this protein is NAC domain-containing protein 105.